A 457-amino-acid chain; its full sequence is uncharacterized protein (457 aa).

A signal peptide spans 1 to 18 (MKLLISLLWSIFFSIVYS). Residues 19–173 (EKTLLNFKHY…GGLPASQFPR (155 aa)) are Lumenal-facing. Residues 174–194 (MPISGGITIAYSVILALWMFF) traverse the membrane as a helical segment. Topologically, residues 195 to 207 (RFQYKHSIVTVQK) are cytoplasmic. The helical transmembrane segment at 208–228 (AIMFLLIFSCAQQAVTSIVLD) threads the bilayer. Residues 229 to 243 (TENLRNRGNFTWLGE) are Lumenal-facing. The chain crosses the membrane as a helical span at residues 244–264 (TLVSILFACQLVLDLALLLIL). The Cytoplasmic segment spans residues 265 to 284 (SWGYTRYSTNMRDRLFTEAK). Residues 285 to 305 (IPLIICFFALFVVRFFAITIQ) form a helical membrane-spanning segment. Topologically, residues 306–314 (SIHLGLWFC) are lumenal. A helical transmembrane segment spans residues 315 to 335 (FFFLTACISALYILFGAFVAL). Residues 336–358 (PSTLRALVEQRYYTLHSIYKIFR) lie on the Cytoplasmic side of the membrane. Residues 359–379 (IMVLCGVVTIFSFSLVALIFC) form a helical membrane-spanning segment. Over 380–457 (SNTNNNSTNK…EEDIRADKSK (78 aa)) the chain is Lumenal.

It belongs to the LU7TM family.

It is found in the endoplasmic reticulum membrane. This is an uncharacterized protein from Schizosaccharomyces pombe (strain 972 / ATCC 24843) (Fission yeast).